The chain runs to 48 residues: Delta-actitoxin-Bcg1c (48 aa).

3 cysteine pairs are disulfide-bonded: C4–C45, C6–C35, and C28–C46.

The protein resides in the secreted. The protein localises to the nematocyst. Functionally, binds specifically to voltage-gated sodium channels SCN1A/Nav1.1, thereby delaying their inactivation during signal transduction. In Bunodosoma cangicum (Sea anemone), this protein is Delta-actitoxin-Bcg1c.